Consider the following 128-residue polypeptide: L-ectoine synthase (128 aa).

Belongs to the ectoine synthase family.

The enzyme catalyses (2S)-4-acetamido-2-aminobutanoate = L-ectoine + H2O. It participates in amine and polyamine biosynthesis; ectoine biosynthesis; L-ectoine from L-aspartate 4-semialdehyde: step 3/3. Functionally, catalyzes the circularization of gamma-N-acetyl-alpha,gamma-diaminobutyric acid (ADABA) to ectoine (1,4,5,6-tetrahydro-2-methyl-4-pyrimidine carboxylic acid), which is an excellent osmoprotectant. This is L-ectoine synthase from Oceanobacillus iheyensis (strain DSM 14371 / CIP 107618 / JCM 11309 / KCTC 3954 / HTE831).